A 500-amino-acid polypeptide reads, in one-letter code: Squalene epoxidase ERG1 (500 aa).

Residues 20-40 form a helical membrane-spanning segment; sequence EADVVVVGAGVFGCTMAFALA. Residues 30-31, 50-51, Arg-58, Arg-145, Asp-332, and Met-345 each bind FAD; these read VF and ER. A run of 2 helical transmembrane segments spans residues 450–470 and 474–494; these read AFLA…LGIF and LAII…IPIM.

Belongs to the squalene monooxygenase family. FAD is required as a cofactor.

It is found in the microsome membrane. Its subcellular location is the endoplasmic reticulum membrane. The protein resides in the lipid droplet. It catalyses the reaction squalene + reduced [NADPH--hemoprotein reductase] + O2 = (S)-2,3-epoxysqualene + oxidized [NADPH--hemoprotein reductase] + H2O + H(+). The protein operates within terpene metabolism; lanosterol biosynthesis; lanosterol from farnesyl diphosphate: step 2/3. Its pathway is steroid metabolism; ergosterol biosynthesis. In terms of biological role, squalene epoxidase; part of the third module of ergosterol biosynthesis pathway that includes the late steps of the pathway. ERG1 catalyzes the epoxidation of squalene into 2,3-epoxysqualene. The third module or late pathway involves the ergosterol synthesis itself through consecutive reactions that mainly occur in the endoplasmic reticulum (ER) membrane. Firstly, the squalene synthase ERG9 catalyzes the condensation of 2 farnesyl pyrophosphate moieties to form squalene, which is the precursor of all steroids. Squalene synthase is crucial for balancing the incorporation of farnesyl diphosphate (FPP) into sterol and nonsterol isoprene synthesis. Secondly, squalene is converted into lanosterol by the consecutive action of the squalene epoxidase ERG1 and the lanosterol synthase ERG7. Then, the delta(24)-sterol C-methyltransferase ERG6 methylates lanosterol at C-24 to produce eburicol. Eburicol is the substrate of the sterol 14-alpha demethylase encoded by CYP51A, CYP51B and CYP51C, to yield 4,4,24-trimethyl ergosta-8,14,24(28)-trienol. CYP51B encodes the enzyme primarily responsible for sterol 14-alpha-demethylation, and plays an essential role in ascospore formation. CYP51A encodes an additional sterol 14-alpha-demethylase, induced on ergosterol depletion and responsible for the intrinsic variation in azole sensitivity. The third CYP51 isoform, CYP51C, does not encode a sterol 14-alpha-demethylase, but is required for full virulence on host wheat ears. The C-14 reductase ERG24 then reduces the C14=C15 double bond which leads to 4,4-dimethylfecosterol. A sequence of further demethylations at C-4, involving the C-4 demethylation complex containing the C-4 methylsterol oxidases ERG25, the sterol-4-alpha-carboxylate 3-dehydrogenase ERG26 and the 3-keto-steroid reductase ERG27, leads to the production of fecosterol via 4-methylfecosterol. ERG28 has a role as a scaffold to help anchor ERG25, ERG26 and ERG27 to the endoplasmic reticulum. The C-8 sterol isomerase ERG2 then catalyzes the reaction which results in unsaturation at C-7 in the B ring of sterols and thus converts fecosterol to episterol. The sterol-C5-desaturases ERG3A and ERG3BB then catalyze the introduction of a C-5 double bond in the B ring to produce 5-dehydroepisterol. The C-22 sterol desaturases ERG5A and ERG5B further convert 5-dehydroepisterol into ergosta-5,7,22,24(28)-tetraen-3beta-ol by forming the C-22(23) double bond in the sterol side chain. Finally, ergosta-5,7,22,24(28)-tetraen-3beta-ol is substrate of the C-24(28) sterol reductase ERG4 to produce ergosterol. This Gibberella zeae (strain ATCC MYA-4620 / CBS 123657 / FGSC 9075 / NRRL 31084 / PH-1) (Wheat head blight fungus) protein is Squalene epoxidase ERG1.